A 267-amino-acid chain; its full sequence is Tryptophan synthase alpha chain (267 aa).

Active-site proton acceptor residues include Glu49 and Asp60.

Belongs to the TrpA family. In terms of assembly, tetramer of two alpha and two beta chains.

The enzyme catalyses (1S,2R)-1-C-(indol-3-yl)glycerol 3-phosphate + L-serine = D-glyceraldehyde 3-phosphate + L-tryptophan + H2O. It functions in the pathway amino-acid biosynthesis; L-tryptophan biosynthesis; L-tryptophan from chorismate: step 5/5. Functionally, the alpha subunit is responsible for the aldol cleavage of indoleglycerol phosphate to indole and glyceraldehyde 3-phosphate. The protein is Tryptophan synthase alpha chain of Acidothermus cellulolyticus (strain ATCC 43068 / DSM 8971 / 11B).